The following is a 118-amino-acid chain: Large ribosomal subunit protein bL19 (118 aa).

This sequence belongs to the bacterial ribosomal protein bL19 family.

In terms of biological role, this protein is located at the 30S-50S ribosomal subunit interface and may play a role in the structure and function of the aminoacyl-tRNA binding site. This is Large ribosomal subunit protein bL19 from Campylobacter jejuni subsp. jejuni serotype O:2 (strain ATCC 700819 / NCTC 11168).